We begin with the raw amino-acid sequence, 318 residues long: Taste receptor type 2 member 60 (318 aa).

Residues 1 to 7 (MNGDHMV) are Extracellular-facing. Residues 8-28 (LGSSVTDKKAIILVTILLLLR) form a helical membrane-spanning segment. The Cytoplasmic segment spans residues 29-40 (LVAIAGNGFITA). Residues 41 to 61 (ALGVEWVLRRMLLPCDKLLVS) form a helical membrane-spanning segment. At 62–88 (LGASHFCLQSVVMGKTIYVFLYPMAFP) the chain is on the extracellular side. A helical membrane pass occupies residues 89–109 (YNPVLQFLAFQWDFLNAATLW). The Cytoplasmic segment spans residues 110-128 (FSTWLSVFYCVKIATFTHP). The helical transmembrane segment at 129–149 (VFFWLKHKLSGWLPWMVFSYV) threads the bilayer. The Extracellular segment spans residues 150–183 (GLSSFTTILFFIGNHRMYQNYLKNHLQPWNVTGN). Residue Asn-179 is glycosylated (N-linked (GlcNAc...) asparagine). A helical transmembrane segment spans residues 184 to 204 (SIRSYCEKFYLFPLKMITWTM). Residues 205-234 (PTAVFFICMILLITSLGRHMKKALLTTSGF) are Cytoplasmic-facing. The chain crosses the membrane as a helical span at residues 235–255 (REPSVQAHIKALLALLSFAML). The Extracellular segment spans residues 256–264 (FISYFLSLV). The helical transmembrane segment at 265 to 285 (FSAAGIFPPLDFKFWVWESVI) threads the bilayer. At 286-318 (YLCAAVHPIILLFSNCRLRAVLKSRRSSRCGTP) the chain is on the cytoplasmic side.

This sequence belongs to the G-protein coupled receptor T2R family.

It localises to the membrane. Its function is as follows. Receptor that may play a role in the perception of bitterness and is gustducin-linked. May play a role in sensing the chemical composition of the gastrointestinal content. The activity of this receptor may stimulate alpha gustducin, mediate PLC-beta-2 activation and lead to the gating of TRPM5. This is Taste receptor type 2 member 60 (TAS2R60) from Pan troglodytes (Chimpanzee).